The primary structure comprises 33 residues: Cytochrome b6-f complex subunit 8 (33 aa).

The chain crosses the membrane as a helical span at residues 2–22 (LFTFAWASLAAIFTFSIAMVV).

The protein belongs to the PetN family. In terms of assembly, the 4 large subunits of the cytochrome b6-f complex are cytochrome b6, subunit IV (17 kDa polypeptide, PetD), cytochrome f and the Rieske protein, while the 4 small subunits are PetG, PetL, PetM and PetN. The complex functions as a dimer.

It is found in the cellular thylakoid membrane. Component of the cytochrome b6-f complex, which mediates electron transfer between photosystem II (PSII) and photosystem I (PSI), cyclic electron flow around PSI, and state transitions. This Prochlorococcus marinus (strain SARG / CCMP1375 / SS120) protein is Cytochrome b6-f complex subunit 8.